Here is a 239-residue protein sequence, read N- to C-terminus: Ribonuclease PH (239 aa).

Phosphate contacts are provided by residues arginine 86 and 124–126; that span reads GTR.

Belongs to the RNase PH family. In terms of assembly, homohexameric ring arranged as a trimer of dimers.

The catalysed reaction is tRNA(n+1) + phosphate = tRNA(n) + a ribonucleoside 5'-diphosphate. In terms of biological role, phosphorolytic 3'-5' exoribonuclease that plays an important role in tRNA 3'-end maturation. Removes nucleotide residues following the 3'-CCA terminus of tRNAs; can also add nucleotides to the ends of RNA molecules by using nucleoside diphosphates as substrates, but this may not be physiologically important. Probably plays a role in initiation of 16S rRNA degradation (leading to ribosome degradation) during starvation. The polypeptide is Ribonuclease PH (Rhizobium etli (strain CIAT 652)).